The sequence spans 370 residues: Cobalt-precorrin-5B C(1)-methyltransferase (370 aa).

This sequence belongs to the CbiD family.

The catalysed reaction is Co-precorrin-5B + S-adenosyl-L-methionine = Co-precorrin-6A + S-adenosyl-L-homocysteine. It functions in the pathway cofactor biosynthesis; adenosylcobalamin biosynthesis; cob(II)yrinate a,c-diamide from sirohydrochlorin (anaerobic route): step 6/10. Its function is as follows. Catalyzes the methylation of C-1 in cobalt-precorrin-5B to form cobalt-precorrin-6A. This chain is Cobalt-precorrin-5B C(1)-methyltransferase, found in Prochlorococcus marinus (strain MIT 9215).